A 363-amino-acid chain; its full sequence is Phospho-N-acetylmuramoyl-pentapeptide-transferase (363 aa).

The next 9 helical transmembrane spans lie at I13–L33, L49–L69, M95–A115, L119–I139, L154–S174, W183–V203, A224–F244, A281–V301, and E343–A363.

The protein belongs to the glycosyltransferase 4 family. MraY subfamily. Mg(2+) serves as cofactor.

It localises to the cell inner membrane. The enzyme catalyses UDP-N-acetyl-alpha-D-muramoyl-L-alanyl-gamma-D-glutamyl-meso-2,6-diaminopimeloyl-D-alanyl-D-alanine + di-trans,octa-cis-undecaprenyl phosphate = di-trans,octa-cis-undecaprenyl diphospho-N-acetyl-alpha-D-muramoyl-L-alanyl-D-glutamyl-meso-2,6-diaminopimeloyl-D-alanyl-D-alanine + UMP. The protein operates within cell wall biogenesis; peptidoglycan biosynthesis. Functionally, catalyzes the initial step of the lipid cycle reactions in the biosynthesis of the cell wall peptidoglycan: transfers peptidoglycan precursor phospho-MurNAc-pentapeptide from UDP-MurNAc-pentapeptide onto the lipid carrier undecaprenyl phosphate, yielding undecaprenyl-pyrophosphoryl-MurNAc-pentapeptide, known as lipid I. This Nostoc punctiforme (strain ATCC 29133 / PCC 73102) protein is Phospho-N-acetylmuramoyl-pentapeptide-transferase.